A 268-amino-acid polypeptide reads, in one-letter code: Ribosomal RNA small subunit methyltransferase A (268 aa).

Asn-18, Leu-20, Gly-45, Glu-66, Asp-91, and Asn-112 together coordinate S-adenosyl-L-methionine.

Belongs to the class I-like SAM-binding methyltransferase superfamily. rRNA adenine N(6)-methyltransferase family. RsmA subfamily.

It is found in the cytoplasm. The catalysed reaction is adenosine(1518)/adenosine(1519) in 16S rRNA + 4 S-adenosyl-L-methionine = N(6)-dimethyladenosine(1518)/N(6)-dimethyladenosine(1519) in 16S rRNA + 4 S-adenosyl-L-homocysteine + 4 H(+). Specifically dimethylates two adjacent adenosines (A1518 and A1519) in the loop of a conserved hairpin near the 3'-end of 16S rRNA in the 30S particle. May play a critical role in biogenesis of 30S subunits. The chain is Ribosomal RNA small subunit methyltransferase A from Pseudoalteromonas translucida (strain TAC 125).